Reading from the N-terminus, the 791-residue chain is Endonuclease MutS2 (791 aa).

An ATP-binding site is contributed by 339–346; the sequence is GPNTGGKT. In terms of domain architecture, Smr spans 715–790; it reads LDLRGERYET…GSGVTIADLK (76 aa).

It belongs to the DNA mismatch repair MutS family. MutS2 subfamily. As to quaternary structure, homodimer. Binds to stalled ribosomes, contacting rRNA.

Functionally, endonuclease that is involved in the suppression of homologous recombination and thus may have a key role in the control of bacterial genetic diversity. Acts as a ribosome collision sensor, splitting the ribosome into its 2 subunits. Detects stalled/collided 70S ribosomes which it binds and splits by an ATP-hydrolysis driven conformational change. Acts upstream of the ribosome quality control system (RQC), a ribosome-associated complex that mediates the extraction of incompletely synthesized nascent chains from stalled ribosomes and their subsequent degradation. Probably generates substrates for RQC. This is Endonuclease MutS2 from Halothermothrix orenii (strain H 168 / OCM 544 / DSM 9562).